The chain runs to 122 residues: Large ribosomal subunit protein uL14 (122 aa).

This sequence belongs to the universal ribosomal protein uL14 family. Part of the 50S ribosomal subunit. Forms a cluster with proteins L3 and L19. In the 70S ribosome, L14 and L19 interact and together make contacts with the 16S rRNA in bridges B5 and B8.

Binds to 23S rRNA. Forms part of two intersubunit bridges in the 70S ribosome. The sequence is that of Large ribosomal subunit protein uL14 from Brachyspira hyodysenteriae (strain ATCC 49526 / WA1).